An 868-amino-acid chain; its full sequence is Alanine--tRNA ligase (868 aa).

Zn(2+) contacts are provided by histidine 556, histidine 560, cysteine 666, and histidine 670.

This sequence belongs to the class-II aminoacyl-tRNA synthetase family. Zn(2+) serves as cofactor.

The protein localises to the cytoplasm. The catalysed reaction is tRNA(Ala) + L-alanine + ATP = L-alanyl-tRNA(Ala) + AMP + diphosphate. Its function is as follows. Catalyzes the attachment of alanine to tRNA(Ala) in a two-step reaction: alanine is first activated by ATP to form Ala-AMP and then transferred to the acceptor end of tRNA(Ala). Also edits incorrectly charged Ser-tRNA(Ala) and Gly-tRNA(Ala) via its editing domain. The chain is Alanine--tRNA ligase from Elusimicrobium minutum (strain Pei191).